Here is a 437-residue protein sequence, read N- to C-terminus: Xylose isomerase (437 aa).

Residues histidine 101 and aspartate 104 contribute to the active site. Mg(2+)-binding residues include glutamate 232, glutamate 268, histidine 271, aspartate 296, aspartate 307, aspartate 309, and aspartate 339.

The protein belongs to the xylose isomerase family. In terms of assembly, homotetramer. Requires Mg(2+) as cofactor.

The protein localises to the cytoplasm. It catalyses the reaction alpha-D-xylose = alpha-D-xylulofuranose. The chain is Xylose isomerase from Mannheimia succiniciproducens (strain KCTC 0769BP / MBEL55E).